A 342-amino-acid chain; its full sequence is 4-hydroxy-2-oxovalerate aldolase (342 aa).

The region spanning 7 to 257 (VWITEVALRD…KTGIDLYKMM (251 aa)) is the Pyruvate carboxyltransferase domain. 15-16 (RD) is a substrate binding site. A Mn(2+)-binding site is contributed by Asp16. Catalysis depends on His19, which acts as the Proton acceptor. The substrate site is built by Ser169 and His196. Residues His196 and His198 each coordinate Mn(2+). Residue Tyr287 coordinates substrate.

It belongs to the 4-hydroxy-2-oxovalerate aldolase family.

It carries out the reaction (S)-4-hydroxy-2-oxopentanoate = acetaldehyde + pyruvate. The sequence is that of 4-hydroxy-2-oxovalerate aldolase (pheE) from Geobacillus stearothermophilus (Bacillus stearothermophilus).